A 514-amino-acid chain; its full sequence is Peptide chain release factor 3 (514 aa).

The tr-type G domain maps to Lys-8–His-268. Residues Ser-17–Thr-24, Asp-85–His-89, and Asn-139–Asp-142 contribute to the GTP site.

Belongs to the TRAFAC class translation factor GTPase superfamily. Classic translation factor GTPase family. PrfC subfamily.

It is found in the cytoplasm. Increases the formation of ribosomal termination complexes and stimulates activities of RF-1 and RF-2. It binds guanine nucleotides and has strong preference for UGA stop codons. It may interact directly with the ribosome. The stimulation of RF-1 and RF-2 is significantly reduced by GTP and GDP, but not by GMP. This Streptococcus agalactiae serotype Ia (strain ATCC 27591 / A909 / CDC SS700) protein is Peptide chain release factor 3.